The following is a 170-amino-acid chain: Putative pre-16S rRNA nuclease (170 aa).

The segment at 1–25 (MVPAQHRPPDRPGDPAHDPGRGRRL) is disordered. Over residues 7–21 (RPPDRPGDPAHDPGR) the composition is skewed to basic and acidic residues.

The protein belongs to the YqgF nuclease family.

The protein resides in the cytoplasm. Could be a nuclease involved in processing of the 5'-end of pre-16S rRNA. The sequence is that of Putative pre-16S rRNA nuclease from Mycobacterium tuberculosis (strain ATCC 25177 / H37Ra).